Reading from the N-terminus, the 121-residue chain is Large ribosomal subunit protein uL18 (121 aa).

The protein belongs to the universal ribosomal protein uL18 family. Part of the 50S ribosomal subunit; part of the 5S rRNA/L5/L18/L25 subcomplex. Contacts the 5S and 23S rRNAs.

This is one of the proteins that bind and probably mediate the attachment of the 5S RNA into the large ribosomal subunit, where it forms part of the central protuberance. The chain is Large ribosomal subunit protein uL18 from Polaromonas sp. (strain JS666 / ATCC BAA-500).